The primary structure comprises 222 residues: Peroxiredoxin (222 aa).

The Thioredoxin domain occupies 2 to 157 (VVLGQKFPEV…ILRLVEALQT (156 aa)). Catalysis depends on C44, which acts as the Cysteine sulfenic acid (-SOH) intermediate. R120 serves as a coordination point for substrate. An intrachain disulfide couples C211 to C217.

Belongs to the peroxiredoxin family. Prx6 subfamily. As to quaternary structure, homodecamer. Pentamer of dimers that assemble into a ring structure.

The protein resides in the cytoplasm. The catalysed reaction is a hydroperoxide + [thioredoxin]-dithiol = an alcohol + [thioredoxin]-disulfide + H2O. In terms of biological role, thiol-specific peroxidase that catalyzes the reduction of hydrogen peroxide and organic hydroperoxides to water and alcohols, respectively. Plays a role in cell protection against oxidative stress by detoxifying peroxides. The sequence is that of Peroxiredoxin from Nanoarchaeum equitans (strain Kin4-M).